Consider the following 547-residue polypeptide: Undecaprenyl phosphate-alpha-4-amino-4-deoxy-L-arabinose arabinosyl transferase (547 aa).

The next 11 helical transmembrane spans lie at 1-21 (MKLTKWALPLFFLLFYLLPLD), 83-103 (FASAAATGLSALLIVWFALQL), 111-131 (FLAGLIYLSLLIVYGIGTYSV), 174-194 (FLTKGFIALAVPVIVIVPYVI), 205-225 (FGPLAMVSAALLAAPWAIAVH), 253-273 (APFWYYLPMGLLGTLPWLGLL), 286-306 (ISPETLYLLAWVVLPLLFFSV), 311-331 (LLTYILPCFAPLAMLLAASAV), 346-366 (AWLNGLFGLICLAVLAVLALS), 378-398 (GALAVAMVIFAGWALLGFIQL), and 408-428 (SALCPMVLAVGLPWALPQSLI).

It belongs to the glycosyltransferase 83 family.

Its subcellular location is the cell inner membrane. The enzyme catalyses 4-amino-4-deoxy-alpha-L-arabinopyranosyl di-trans,octa-cis-undecaprenyl phosphate + lipid IVA = lipid IIA + di-trans,octa-cis-undecaprenyl phosphate.. It functions in the pathway lipopolysaccharide metabolism; 4-amino-4-deoxy-beta-L-arabinose-lipid A biosynthesis. Functionally, catalyzes the transfer of the L-Ara4N moiety of the glycolipid undecaprenyl phosphate-alpha-L-Ara4N to lipid A. The modified arabinose is attached to lipid A and is required for resistance to polymyxin and cationic antimicrobial peptides. This Aeromonas salmonicida (strain A449) protein is Undecaprenyl phosphate-alpha-4-amino-4-deoxy-L-arabinose arabinosyl transferase.